Reading from the N-terminus, the 196-residue chain is Ribosome maturation factor RimM (196 aa).

Positions 118–196 (QGEYYWRDLI…EMTVDWDPDF (79 aa)) constitute a PRC barrel domain.

The protein belongs to the RimM family. As to quaternary structure, binds ribosomal protein uS19.

It localises to the cytoplasm. Functionally, an accessory protein needed during the final step in the assembly of 30S ribosomal subunit, possibly for assembly of the head region. Essential for efficient processing of 16S rRNA. May be needed both before and after RbfA during the maturation of 16S rRNA. It has affinity for free ribosomal 30S subunits but not for 70S ribosomes. This chain is Ribosome maturation factor RimM, found in Alcanivorax borkumensis (strain ATCC 700651 / DSM 11573 / NCIMB 13689 / SK2).